Here is a 384-residue protein sequence, read N- to C-terminus: Carbamoyl phosphate synthase small chain (384 aa).

The CPSase stretch occupies residues 1-192 (MIKKIPAILV…LADRNREKIY (192 aa)). Residues Ser51, Gly244, and Gly246 each contribute to the L-glutamine site. Residues 196–382 (KVIVIDFGVK…IEIMKQFRKE (187 aa)) form the Glutamine amidotransferase type-1 domain. Cys272 acts as the Nucleophile in catalysis. L-glutamine is bound by residues Met273, Gln276, Asn312, Gly314, and Phe315. Catalysis depends on residues His355 and Glu357.

It belongs to the CarA family. Composed of two chains; the small (or glutamine) chain promotes the hydrolysis of glutamine to ammonia, which is used by the large (or ammonia) chain to synthesize carbamoyl phosphate. Tetramer of heterodimers (alpha,beta)4.

It localises to the plastid. It is found in the chloroplast. It carries out the reaction hydrogencarbonate + L-glutamine + 2 ATP + H2O = carbamoyl phosphate + L-glutamate + 2 ADP + phosphate + 2 H(+). The enzyme catalyses L-glutamine + H2O = L-glutamate + NH4(+). It participates in amino-acid biosynthesis; L-arginine biosynthesis; carbamoyl phosphate from bicarbonate: step 1/1. It functions in the pathway pyrimidine metabolism; UMP biosynthesis via de novo pathway; (S)-dihydroorotate from bicarbonate: step 1/3. In terms of biological role, small subunit of the glutamine-dependent carbamoyl phosphate synthetase (CPSase). CPSase catalyzes the formation of carbamoyl phosphate from the ammonia moiety of glutamine, carbonate, and phosphate donated by ATP, constituting the first step of 2 biosynthetic pathways, one leading to arginine and/or urea and the other to pyrimidine nucleotides. The small subunit (glutamine amidotransferase) binds and cleaves glutamine to supply the large subunit with the substrate ammonia. The polypeptide is Carbamoyl phosphate synthase small chain (Porphyra purpurea (Red seaweed)).